The sequence spans 373 residues: Unsaturated rhamnogalacturonyl hydrolase YteR (373 aa).

Residues 40 to 41 (HY), Asp88, and 132 to 136 (HKDGY) each bind substrate. Asp143 acts as the Proton donor in catalysis. Substrate contacts are provided by residues 213–217 (RSIGW) and 333–334 (TS).

The protein belongs to the glycosyl hydrolase 105 family. Monomer.

Its subcellular location is the cytoplasm. The catalysed reaction is 2-O-(4-deoxy-beta-L-threo-hex-4-enopyranuronosyl)-alpha-L-rhamnose + H2O = 5-dehydro-4-deoxy-D-glucuronate + L-rhamnopyranose. Functionally, catalyzes the hydrolysis of unsaturated rhamnogalacturonan disaccharide to yield unsaturated D-galacturonic acid and L-rhamnose. It cannot act on unsaturated glucuronyl hydrolase (UGL) substrates containing unsaturated D-glucuronic acid at the non-reducing terminus, although the active pockets of YesR and UGL are very similar. The sequence is that of Unsaturated rhamnogalacturonyl hydrolase YteR (yteR) from Bacillus subtilis (strain 168).